A 521-amino-acid polypeptide reads, in one-letter code: uncharacterized protein (521 aa).

Residues 14–41 (QFQQMQHQMQQQQQQQMQQQQQQQQQQQ) adopt a coiled-coil conformation. Composition is skewed to low complexity over residues 238–266 (LSGS…TSSS), 275–353 (SSTS…NNNN), and 423–482 (PRLS…PNNP). 2 disordered regions span residues 238–357 (LSGS…ISGF) and 413–491 (TAVA…SNNG).

This is an uncharacterized protein from Dictyostelium discoideum (Social amoeba).